Consider the following 31-residue polypeptide: Antifungal protein 1 (31 aa).

It localises to the secreted. Functionally, antifungal activity against C.albicans ATCC 76615. This chain is Antifungal protein 1, found in Musca domestica (House fly).